A 98-amino-acid polypeptide reads, in one-letter code: Aspartyl/glutamyl-tRNA(Asn/Gln) amidotransferase subunit C (98 aa).

Residues 77–98 are disordered; the sequence is NEAPNPEGDFFRVPQILNTDEE.

Belongs to the GatC family. In terms of assembly, heterotrimer of A, B and C subunits.

The catalysed reaction is L-glutamyl-tRNA(Gln) + L-glutamine + ATP + H2O = L-glutaminyl-tRNA(Gln) + L-glutamate + ADP + phosphate + H(+). The enzyme catalyses L-aspartyl-tRNA(Asn) + L-glutamine + ATP + H2O = L-asparaginyl-tRNA(Asn) + L-glutamate + ADP + phosphate + 2 H(+). In terms of biological role, allows the formation of correctly charged Asn-tRNA(Asn) or Gln-tRNA(Gln) through the transamidation of misacylated Asp-tRNA(Asn) or Glu-tRNA(Gln) in organisms which lack either or both of asparaginyl-tRNA or glutaminyl-tRNA synthetases. The reaction takes place in the presence of glutamine and ATP through an activated phospho-Asp-tRNA(Asn) or phospho-Glu-tRNA(Gln). The sequence is that of Aspartyl/glutamyl-tRNA(Asn/Gln) amidotransferase subunit C from Crocosphaera subtropica (strain ATCC 51142 / BH68) (Cyanothece sp. (strain ATCC 51142)).